Consider the following 929-residue polypeptide: Bifunctional uridylyltransferase/uridylyl-removing enzyme (929 aa).

Residues 1 to 383 (MDSVTTEHKQ…RPTPAKRRVP (383 aa)) form a uridylyltransferase region. A uridylyl-removing region spans residues 384–739 (DSDDFIVDNN…VGFDEVRGVT (356 aa)). The HD domain occupies 499 to 622 (VDEHLIRCVG…VQSVEQMKLL (124 aa)). ACT domains follow at residues 740-822 (ELTI…VVAR) and 850-927 (VIEV…AVQP).

Belongs to the GlnD family. It depends on Mg(2+) as a cofactor.

The catalysed reaction is [protein-PII]-L-tyrosine + UTP = [protein-PII]-uridylyl-L-tyrosine + diphosphate. It carries out the reaction [protein-PII]-uridylyl-L-tyrosine + H2O = [protein-PII]-L-tyrosine + UMP + H(+). Its activity is regulated as follows. Uridylyltransferase (UTase) activity is inhibited by glutamine, while glutamine activates uridylyl-removing (UR) activity. In terms of biological role, modifies, by uridylylation and deuridylylation, the PII regulatory proteins (GlnB and homologs), in response to the nitrogen status of the cell that GlnD senses through the glutamine level. Under low glutamine levels, catalyzes the conversion of the PII proteins and UTP to PII-UMP and PPi, while under higher glutamine levels, GlnD hydrolyzes PII-UMP to PII and UMP (deuridylylation). Thus, controls uridylylation state and activity of the PII proteins, and plays an important role in the regulation of nitrogen fixation and metabolism. The polypeptide is Bifunctional uridylyltransferase/uridylyl-removing enzyme (Bradyrhizobium diazoefficiens (strain JCM 10833 / BCRC 13528 / IAM 13628 / NBRC 14792 / USDA 110)).